A 440-amino-acid chain; its full sequence is tRNA-2-methylthio-N(6)-dimethylallyladenosine synthase (440 aa).

An MTTase N-terminal domain is found at 5–121 (KKLYIKTYGC…LPEMEAKAGT (117 aa)). Residues Cys14, Cys50, Cys84, Cys159, Cys163, and Cys166 each coordinate [4Fe-4S] cluster. The region spanning 145–378 (AKRGPTAFLT…LTRQQREVQD (234 aa)) is the Radical SAM core domain. One can recognise a TRAM domain in the interval 378–440 (DSMVGRELGV…ANSLAGELID (63 aa)).

The protein belongs to the methylthiotransferase family. MiaB subfamily. In terms of assembly, monomer. It depends on [4Fe-4S] cluster as a cofactor.

The protein localises to the cytoplasm. It carries out the reaction N(6)-dimethylallyladenosine(37) in tRNA + (sulfur carrier)-SH + AH2 + 2 S-adenosyl-L-methionine = 2-methylsulfanyl-N(6)-dimethylallyladenosine(37) in tRNA + (sulfur carrier)-H + 5'-deoxyadenosine + L-methionine + A + S-adenosyl-L-homocysteine + 2 H(+). Functionally, catalyzes the methylthiolation of N6-(dimethylallyl)adenosine (i(6)A), leading to the formation of 2-methylthio-N6-(dimethylallyl)adenosine (ms(2)i(6)A) at position 37 in tRNAs that read codons beginning with uridine. The sequence is that of tRNA-2-methylthio-N(6)-dimethylallyladenosine synthase from Ruegeria sp. (strain TM1040) (Silicibacter sp.).